A 351-amino-acid chain; its full sequence is Protein-glutamate methylesterase/protein-glutamine glutaminase 2 (351 aa).

One can recognise a Response regulatory domain in the interval 4–121; sequence KVLVVDDSTL…PQGFNEYQDL (118 aa). Asp-55 is subject to 4-aspartylphosphate. The region spanning 156–348 is the CheB-type methylesterase domain; it reads RTVNTQLVAI…DKLLQYLASV (193 aa). Catalysis depends on residues Ser-168, His-194, and Asp-290.

The protein belongs to the CheB family. Phosphorylated by CheA. Phosphorylation of the N-terminal regulatory domain activates the methylesterase activity.

It localises to the cytoplasm. The enzyme catalyses [protein]-L-glutamate 5-O-methyl ester + H2O = L-glutamyl-[protein] + methanol + H(+). The catalysed reaction is L-glutaminyl-[protein] + H2O = L-glutamyl-[protein] + NH4(+). Functionally, involved in chemotaxis. Part of a chemotaxis signal transduction system that modulates chemotaxis in response to various stimuli. Catalyzes the demethylation of specific methylglutamate residues introduced into the chemoreceptors (methyl-accepting chemotaxis proteins or MCP) by CheR. Also mediates the irreversible deamidation of specific glutamine residues to glutamic acid. The protein is Protein-glutamate methylesterase/protein-glutamine glutaminase 2 of Shewanella oneidensis (strain ATCC 700550 / JCM 31522 / CIP 106686 / LMG 19005 / NCIMB 14063 / MR-1).